Here is a 351-residue protein sequence, read N- to C-terminus: N-acetyl-gamma-glutamyl-phosphate reductase (351 aa).

Residue cysteine 154 is part of the active site.

The protein belongs to the NAGSA dehydrogenase family. Type 1 subfamily.

It is found in the cytoplasm. It carries out the reaction N-acetyl-L-glutamate 5-semialdehyde + phosphate + NADP(+) = N-acetyl-L-glutamyl 5-phosphate + NADPH + H(+). Its pathway is amino-acid biosynthesis; L-arginine biosynthesis; N(2)-acetyl-L-ornithine from L-glutamate: step 3/4. Catalyzes the NADPH-dependent reduction of N-acetyl-5-glutamyl phosphate to yield N-acetyl-L-glutamate 5-semialdehyde. The chain is N-acetyl-gamma-glutamyl-phosphate reductase from Prochlorococcus marinus (strain MIT 9515).